A 268-amino-acid chain; its full sequence is Glutamate racemase (268 aa).

Residues 14-15 and 46-47 each bind substrate; these read DS and YG. Catalysis depends on Cys-78, which acts as the Proton donor/acceptor. 79–80 serves as a coordination point for substrate; the sequence is NT. Cys-192 serves as the catalytic Proton donor/acceptor. 193–194 lines the substrate pocket; that stretch reads TH.

Belongs to the aspartate/glutamate racemases family.

It catalyses the reaction L-glutamate = D-glutamate. Its pathway is cell wall biogenesis; peptidoglycan biosynthesis. In terms of biological role, provides the (R)-glutamate required for cell wall biosynthesis. In Sphingopyxis alaskensis (strain DSM 13593 / LMG 18877 / RB2256) (Sphingomonas alaskensis), this protein is Glutamate racemase.